The sequence spans 274 residues: MSAANADFELFRVFLEKTCGIVLGSNKQYLVSSRLNKLMEQQGIKSLGELVQRIQTQRGGLREMVVDAMTTNETLWFRDTYPFEVLKQRVLPELIKANGGQRLRIWSAACSSGQEPYSLSMAIDEFEKTNLGQLKAGVQIVATDLSGSMLTAAKAGEYDTLAMGRGLSPERLQRYFDAKGPGRWAVKPAIRSRVEFRALNLLDSYASLGKFDMVFCRNVLIYFSAEVKRDILLRIHGTLKPGGYLFLGASEALNNLPDHYQMVQCSPGIIYRAK.

One can recognise a CheR-type methyltransferase domain in the interval 1–274; the sequence is MSAANADFEL…CSPGIIYRAK (274 aa). S-adenosyl-L-methionine is bound by residues Asn-72, Thr-74, Arg-78, Glu-115, Asp-144, 200 to 201, and 217 to 218; these read NL and RN.

The enzyme catalyses L-glutamyl-[protein] + S-adenosyl-L-methionine = [protein]-L-glutamate 5-O-methyl ester + S-adenosyl-L-homocysteine. Its function is as follows. Methylation of the membrane-bound methyl-accepting chemotaxis proteins (MCP) to form gamma-glutamyl methyl ester residues in MCP. The protein is Chemotaxis protein methyltransferase 1 (cheR1) of Pseudomonas aeruginosa (strain ATCC 15692 / DSM 22644 / CIP 104116 / JCM 14847 / LMG 12228 / 1C / PRS 101 / PAO1).